The primary structure comprises 190 residues: MKLIVGLGNPESRYIGTRHNIGFSAVEKIAASFGANFSKGKGKSLEAKITHRGEQVIIIKPMTYMNLSGHAVVAAMNFYKIVRNDILIICDDLNLPSGTIRLRAKGSAGGQNGLKHIIESLGSEEFARLRIGIRVDETSLTSFSSFVLGKFSENEKVVMEKILPITSDAALDFTINGIEHAMNNYNKPVT.

Residue Tyr14 coordinates tRNA. His19 acts as the Proton acceptor in catalysis. TRNA-binding residues include Tyr64, Asn66, and Asn112.

The protein belongs to the PTH family. As to quaternary structure, monomer.

Its subcellular location is the cytoplasm. The enzyme catalyses an N-acyl-L-alpha-aminoacyl-tRNA + H2O = an N-acyl-L-amino acid + a tRNA + H(+). In terms of biological role, hydrolyzes ribosome-free peptidyl-tRNAs (with 1 or more amino acids incorporated), which drop off the ribosome during protein synthesis, or as a result of ribosome stalling. Its function is as follows. Catalyzes the release of premature peptidyl moieties from peptidyl-tRNA molecules trapped in stalled 50S ribosomal subunits, and thus maintains levels of free tRNAs and 50S ribosomes. The chain is Peptidyl-tRNA hydrolase from Pelodictyon phaeoclathratiforme (strain DSM 5477 / BU-1).